Reading from the N-terminus, the 345-residue chain is N-glycosylase/DNA lyase (345 aa).

Positions 149, 154, and 204 each coordinate DNA. The active-site Schiff-base intermediate with DNA is the K249. Residues P266 and D268 each contribute to the 8-oxoguanine site. The DNA site is built by H270 and Q287. 8-oxoguanine contacts are provided by Q315 and F319. Residues 324-334 are compositionally biased toward basic and acidic residues; that stretch reads RQSRHAQEPPA. The tract at residues 324–345 is disordered; that stretch reads RQSRHAQEPPAKRRKGSKGPEG. Positions 335-345 are enriched in basic residues; the sequence is KRRKGSKGPEG.

Belongs to the type-1 OGG1 family. In terms of tissue distribution, ubiquitous.

It localises to the nucleus. It is found in the nucleoplasm. Its subcellular location is the nucleus speckle. The protein localises to the nucleus matrix. The protein resides in the mitochondrion. The catalysed reaction is 2'-deoxyribonucleotide-(2'-deoxyribose 5'-phosphate)-2'-deoxyribonucleotide-DNA = a 3'-end 2'-deoxyribonucleotide-(2,3-dehydro-2,3-deoxyribose 5'-phosphate)-DNA + a 5'-end 5'-phospho-2'-deoxyribonucleoside-DNA + H(+). Functionally, DNA repair enzyme that incises DNA at 8-oxoG residues. Excises 7,8-dihydro-8-oxoguanine and 2,6-diamino-4-hydroxy-5-N-methylformamidopyrimidine (FAPY) from damaged DNA. Has a beta-lyase activity that nicks DNA 3' to the lesion. This Homo sapiens (Human) protein is N-glycosylase/DNA lyase (OGG1).